Consider the following 202-residue polypeptide: UPF0056 membrane protein CPn_1010/CP_0843/CPj1010/CpB1048 (202 aa).

6 helical membrane passes run 7 to 27, 39 to 59, 61 to 81, 105 to 125, 137 to 157, and 175 to 195; these read LSLLFYVLFDSPGSIPVFVAL, VILRECLFALGALILFVTFGR, FFQFLDISLYAFQIIGGFLLF, PIFFPLAFPVITGPAVITALL, IIFTAMIIAWAFSLFTLLCSS, and FGIALLLMSVNLMLKGISIAF.

The protein belongs to the UPF0056 (MarC) family.

It is found in the cell membrane. The protein is UPF0056 membrane protein CPn_1010/CP_0843/CPj1010/CpB1048 of Chlamydia pneumoniae (Chlamydophila pneumoniae).